We begin with the raw amino-acid sequence, 361 residues long: Phospho-N-acetylmuramoyl-pentapeptide-transferase (361 aa).

10 consecutive transmembrane segments (helical) span residues 26–46, 73–93, 97–117, 134–154, 168–188, 200–220, 237–257, 264–284, 289–309, and 340–360; these read AILG…VMIR, TMGG…WADL, YVWV…VDDY, YFWQ…TASM, VSLT…IVGS, GLAI…AYLS, TGEL…FLWF, VFMG…VAVI, IVLF…ILQV, and IVRF…SLKI.

It belongs to the glycosyltransferase 4 family. MraY subfamily. Mg(2+) is required as a cofactor.

It is found in the cell inner membrane. It catalyses the reaction UDP-N-acetyl-alpha-D-muramoyl-L-alanyl-gamma-D-glutamyl-meso-2,6-diaminopimeloyl-D-alanyl-D-alanine + di-trans,octa-cis-undecaprenyl phosphate = di-trans,octa-cis-undecaprenyl diphospho-N-acetyl-alpha-D-muramoyl-L-alanyl-D-glutamyl-meso-2,6-diaminopimeloyl-D-alanyl-D-alanine + UMP. It participates in cell wall biogenesis; peptidoglycan biosynthesis. In terms of biological role, catalyzes the initial step of the lipid cycle reactions in the biosynthesis of the cell wall peptidoglycan: transfers peptidoglycan precursor phospho-MurNAc-pentapeptide from UDP-MurNAc-pentapeptide onto the lipid carrier undecaprenyl phosphate, yielding undecaprenyl-pyrophosphoryl-MurNAc-pentapeptide, known as lipid I. The sequence is that of Phospho-N-acetylmuramoyl-pentapeptide-transferase from Marinobacter nauticus (strain ATCC 700491 / DSM 11845 / VT8) (Marinobacter aquaeolei).